Here is a 78-residue protein sequence, read N- to C-terminus: Acyl carrier protein (78 aa).

Residues 2 to 77 (STIEESVKSI…AAIDFIKESK (76 aa)) enclose the Carrier domain. O-(pantetheine 4'-phosphoryl)serine is present on S37.

This sequence belongs to the acyl carrier protein (ACP) family. 4'-phosphopantetheine is transferred from CoA to a specific serine of apo-ACP by AcpS. This modification is essential for activity because fatty acids are bound in thioester linkage to the sulfhydryl of the prosthetic group.

It localises to the cytoplasm. The protein operates within lipid metabolism; fatty acid biosynthesis. Carrier of the growing fatty acid chain in fatty acid biosynthesis. This is Acyl carrier protein from Wigglesworthia glossinidia brevipalpis.